Here is a 55-residue protein sequence, read N- to C-terminus: Large ribosomal subunit protein bL33 (55 aa).

Belongs to the bacterial ribosomal protein bL33 family.

This chain is Large ribosomal subunit protein bL33, found in Mycobacterium leprae (strain Br4923).